Consider the following 502-residue polypeptide: CBL-interacting protein kinase 11 (502 aa).

The Protein kinase domain maps to 12 to 267; it reads YEVGKQLGQG…IPRIKRSTWY (256 aa). Residues 18-26 and Lys41 contribute to the ATP site; that span reads LGQGTFAKV. Asp135 serves as the catalytic Proton acceptor. Residues 153 to 182 are activation loop; the sequence is DFGLSALAESKRQDGLLHTTCGTPAYVAPE. The NAF domain maps to 297 to 333; that stretch reads AECSTSEENQGSLSLPNLNAFDIISLSTGFNLSGFFE. Residues 339–367 form a PPI region; sequence QEERFTTRQPVTTVLGKLKELAKRLKLKV. A disordered region spans residues 447–502; the sequence is LQGEQQQSPLPPELPQDQLQPSLPQQEKQDMPEPPLLPQVPQEEVQTSIPAEQTKN. Over residues 461-472 the composition is skewed to low complexity; that stretch reads PQDQLQPSLPQQ. Polar residues predominate over residues 493-502; sequence TSIPAEQTKN.

It belongs to the protein kinase superfamily. CAMK Ser/Thr protein kinase family. SNF1 subfamily. It depends on Mn(2+) as a cofactor.

It catalyses the reaction L-seryl-[protein] + ATP = O-phospho-L-seryl-[protein] + ADP + H(+). The catalysed reaction is L-threonyl-[protein] + ATP = O-phospho-L-threonyl-[protein] + ADP + H(+). Its function is as follows. CIPK serine-threonine protein kinases interact with CBL proteins. Binding of a CBL protein to the regulatory NAF domain of CIPK protein lead to the activation of the kinase in a calcium-dependent manner. This chain is CBL-interacting protein kinase 11 (CIPK11), found in Oryza sativa subsp. japonica (Rice).